Reading from the N-terminus, the 1252-residue chain is DNA-directed RNA polymerase subunit beta (1252 aa).

Belongs to the RNA polymerase beta chain family. In terms of assembly, the RNAP catalytic core consists of 2 alpha, 1 beta, 1 beta' and 1 omega subunit. When a sigma factor is associated with the core the holoenzyme is formed, which can initiate transcription.

It carries out the reaction RNA(n) + a ribonucleoside 5'-triphosphate = RNA(n+1) + diphosphate. DNA-dependent RNA polymerase catalyzes the transcription of DNA into RNA using the four ribonucleoside triphosphates as substrates. This chain is DNA-directed RNA polymerase subunit beta, found in Chlamydia pneumoniae (Chlamydophila pneumoniae).